The primary structure comprises 304 residues: Sulfate adenylyltransferase subunit 2 (304 aa).

Belongs to the PAPS reductase family. CysD subfamily. Heterodimer composed of CysD, the smaller subunit, and CysNC.

The catalysed reaction is sulfate + ATP + H(+) = adenosine 5'-phosphosulfate + diphosphate. The protein operates within sulfur metabolism; hydrogen sulfide biosynthesis; sulfite from sulfate: step 1/3. Functionally, with CysN forms the ATP sulfurylase (ATPS) that catalyzes the adenylation of sulfate producing adenosine 5'-phosphosulfate (APS) and diphosphate, the first enzymatic step in sulfur assimilation pathway. APS synthesis involves the formation of a high-energy phosphoric-sulfuric acid anhydride bond driven by GTP hydrolysis by CysN coupled to ATP hydrolysis by CysD. The sequence is that of Sulfate adenylyltransferase subunit 2 from Xylella fastidiosa (strain 9a5c).